The sequence spans 101 residues: Apolipoprotein C-II (101 aa).

The signal sequence occupies residues 1–22 (MGARHLLALLLVLLVLGFEVQG). Residues 66-74 (TMDEKIRDM) are lipid binding. The segment at 78–101 (STAAVSTYVGIFTDQLLSLLKGDE) is lipoprotein lipase cofactor.

The protein belongs to the apolipoprotein C2 family. In terms of processing, proapolipoprotein C-II is synthesized as a sialic acid containing glycoprotein which is subsequently desialylated prior to its proteolytic processing. Post-translationally, proapolipoprotein C-II, the major form found in plasma undergoes proteolytic cleavage of its N-terminal hexapeptide to generate apolipoprotein C-II, which occurs as the minor form in plasma.

The protein resides in the secreted. Component of chylomicrons, very low-density lipoproteins (VLDL), low-density lipoproteins (LDL), and high-density lipoproteins (HDL) in plasma. Plays an important role in lipoprotein metabolism as an activator of lipoprotein lipase. Both proapolipoprotein C-II and apolipoprotein C-II can activate lipoprotein lipase. This Tapirus indicus (Asiatic tapir) protein is Apolipoprotein C-II (APOC2).